The primary structure comprises 340 residues: Glutamyl-tRNA reductase (340 aa).

Substrate-binding positions include 49–52 (TCNR), serine 108, 113–115 (ETE), and glutamine 119. Cysteine 50 serves as the catalytic Nucleophile. 188 to 193 (GAGEMS) serves as a coordination point for NADP(+).

Belongs to the glutamyl-tRNA reductase family. As to quaternary structure, homodimer.

The enzyme catalyses (S)-4-amino-5-oxopentanoate + tRNA(Glu) + NADP(+) = L-glutamyl-tRNA(Glu) + NADPH + H(+). The protein operates within porphyrin-containing compound metabolism; protoporphyrin-IX biosynthesis; 5-aminolevulinate from L-glutamyl-tRNA(Glu): step 1/2. Its function is as follows. Catalyzes the NADPH-dependent reduction of glutamyl-tRNA(Glu) to glutamate 1-semialdehyde (GSA). This is Glutamyl-tRNA reductase from Akkermansia muciniphila (strain ATCC BAA-835 / DSM 22959 / JCM 33894 / BCRC 81048 / CCUG 64013 / CIP 107961 / Muc).